Reading from the N-terminus, the 136-residue chain is Urease subunit beta (136 aa).

It belongs to the urease beta subunit family. In terms of assembly, heterotrimer of UreA (gamma), UreB (beta) and UreC (alpha) subunits. Three heterotrimers associate to form the active enzyme.

The protein localises to the cytoplasm. It carries out the reaction urea + 2 H2O + H(+) = hydrogencarbonate + 2 NH4(+). Its pathway is nitrogen metabolism; urea degradation; CO(2) and NH(3) from urea (urease route): step 1/1. The chain is Urease subunit beta from Staphylococcus aureus (strain Mu3 / ATCC 700698).